Consider the following 438-residue polypeptide: Transmembrane protein 184C (438 aa).

7 consecutive transmembrane segments (helical) span residues L17–L37, A48–L68, I86–I106, V176–L196, Y212–Y232, V254–I274, and A287–A307. Positions P358–S438 are disordered. Composition is skewed to low complexity over residues S374–V390 and T404–T413. Residues G426–S438 show a composition bias toward basic and acidic residues.

This sequence belongs to the TMEM184 family.

It localises to the membrane. Possible tumor suppressor which may play a role in cell growth. In Bos taurus (Bovine), this protein is Transmembrane protein 184C (TMEM184C).